The following is a 451-amino-acid chain: Phosphoglucosamine mutase (451 aa).

Residue S101 is the Phosphoserine intermediate of the active site. Mg(2+) is bound by residues S101, D243, D245, and D247. Position 101 is a phosphoserine (S101).

This sequence belongs to the phosphohexose mutase family. The cofactor is Mg(2+). Activated by phosphorylation.

The enzyme catalyses alpha-D-glucosamine 1-phosphate = D-glucosamine 6-phosphate. Functionally, catalyzes the conversion of glucosamine-6-phosphate to glucosamine-1-phosphate. In Thermodesulfovibrio yellowstonii (strain ATCC 51303 / DSM 11347 / YP87), this protein is Phosphoglucosamine mutase.